Reading from the N-terminus, the 403-residue chain is S-arrestin (403 aa).

Thr231 carries the phosphothreonine modification. The tract at residues 381 to 403 (RQNLKDTGENTEGKKDEDAGQDE) is disordered.

Belongs to the arrestin family. As to quaternary structure, monomer. Homodimer. Homotetramer. Interacts with RHO (via the phosphorylated C-terminus). In terms of tissue distribution, retina and pineal gland.

It localises to the cell projection. The protein localises to the cilium. Its subcellular location is the photoreceptor outer segment. The protein resides in the membrane. Binds to photoactivated, phosphorylated RHO and terminates RHO signaling via G-proteins by competing with G-proteins for the same binding site on RHO. May play a role in preventing light-dependent degeneration of retinal photoreceptor cells. The sequence is that of S-arrestin (Sag) from Rattus norvegicus (Rat).